An 83-amino-acid polypeptide reads, in one-letter code: Three-finger toxin MALT0052C (83 aa).

The signal sequence occupies residues 1-21 (MKTLLLTLVVVTIVCLDFGHT). 4 disulfides stabilise this stretch: cysteine 24–cysteine 45, cysteine 38–cysteine 62, cysteine 64–cysteine 75, and cysteine 76–cysteine 81.

The protein belongs to the three-finger toxin family. Short-chain subfamily. Type I alpha-neurotoxin sub-subfamily. In terms of tissue distribution, expressed by the venom gland.

It is found in the secreted. Functionally, binds to muscle nicotinic acetylcholine receptor (nAChR) and inhibit acetylcholine from binding to the receptor, thereby impairing neuromuscular transmission. The protein is Three-finger toxin MALT0052C of Micrurus altirostris (Uruguayan coral snake).